The following is a 196-amino-acid chain: Putative NADH dehydrogenase/NAD(P)H nitroreductase Smlt0482 (196 aa).

Belongs to the nitroreductase family. HadB/RutE subfamily. Requires FMN as cofactor.

The polypeptide is Putative NADH dehydrogenase/NAD(P)H nitroreductase Smlt0482 (Stenotrophomonas maltophilia (strain K279a)).